Reading from the N-terminus, the 193-residue chain is Acyl-homoserine-lactone synthase (193 aa).

The protein belongs to the autoinducer synthase family.

It carries out the reaction a fatty acyl-[ACP] + S-adenosyl-L-methionine = an N-acyl-L-homoserine lactone + S-methyl-5'-thioadenosine + holo-[ACP] + H(+). In terms of biological role, required for the synthesis of N-(3-oxodecanoyl)-L-homoserine lactone (ODHL), an autoinducer molecule which binds to VanR. The polypeptide is Acyl-homoserine-lactone synthase (vanI) (Vibrio anguillarum (Listonella anguillarum)).